The chain runs to 421 residues: Diaminobutyrate--2-oxoglutarate transaminase (421 aa).

Lys262 is subject to N6-(pyridoxal phosphate)lysine.

The protein belongs to the class-III pyridoxal-phosphate-dependent aminotransferase family. The cofactor is pyridoxal 5'-phosphate.

It carries out the reaction L-2,4-diaminobutanoate + 2-oxoglutarate = L-aspartate 4-semialdehyde + L-glutamate. The protein operates within amine and polyamine biosynthesis; ectoine biosynthesis; L-ectoine from L-aspartate 4-semialdehyde: step 1/3. Its function is as follows. Catalyzes reversively the conversion of L-aspartate beta-semialdehyde (ASA) to L-2,4-diaminobutyrate (DABA) by transamination with L-glutamate. This Vibrio parahaemolyticus serotype O3:K6 (strain RIMD 2210633) protein is Diaminobutyrate--2-oxoglutarate transaminase (ectB).